The following is a 269-amino-acid chain: MANWHEWAELLERVREENPLVHNITNVVVTNWTANGLLALGASPVMAYAKEEVGEMAKLAGALVLNIGTLNDKEVEAMLVAGQAANEAGVPVIFDPVGAGATRYRTETARRIAEQVKLAVIRGNAAEIANMIGEAWTIKGVDAGGGSGDRVALAKRAAEQLGAVVAITGKEDVVADGQTTYLIQNGHPLLTKVTGAGCLLTSVIGAFAAVERDAAAAAVAALVYYGVAAEQAAAKAGERGPGSFQTAFLDALAYTSVDDVKRHGRVEQR.

Met46 is a substrate binding site. ATP is bound by residues Arg122 and Thr168. Substrate is bound at residue Gly195.

The protein belongs to the Thz kinase family. Mg(2+) serves as cofactor.

It carries out the reaction 5-(2-hydroxyethyl)-4-methylthiazole + ATP = 4-methyl-5-(2-phosphooxyethyl)-thiazole + ADP + H(+). It participates in cofactor biosynthesis; thiamine diphosphate biosynthesis; 4-methyl-5-(2-phosphoethyl)-thiazole from 5-(2-hydroxyethyl)-4-methylthiazole: step 1/1. Its function is as follows. Catalyzes the phosphorylation of the hydroxyl group of 4-methyl-5-beta-hydroxyethylthiazole (THZ). The polypeptide is Hydroxyethylthiazole kinase (Geobacillus kaustophilus (strain HTA426)).